The sequence spans 852 residues: G-type lectin S-receptor-like serine/threonine-protein kinase At4g03230 (852 aa).

The signal sequence occupies residues 1-19 (MILSVFFYMFLLHIRRLDC). One can recognise a Bulb-type lectin domain in the interval 20 to 154 (FVAVQDSKTL…GNEANVVWQS (135 aa)). Residues 20-444 (FVAVQDSKTL…RGRGRYGEAK (425 aa)) are Extracellular-facing. N-linked (GlcNAc...) asparagine glycans are attached at residues Asn-37, Asn-59, Asn-171, Asn-187, Asn-234, and Asn-243. The 37-residue stretch at 285 to 321 (PRDECSVYNACGNFGSCNSKNEEMCKCLPGFRPNFLE) folds into the EGF-like domain. Cystine bridges form between Cys-289/Cys-301 and Cys-295/Cys-309. The region spanning 339–426 (CGKDGVVVGD…SRNVFIRVAV (88 aa)) is the PAN domain. An N-linked (GlcNAc...) asparagine glycan is attached at Asn-352. Disulfide bonds link Cys-373–Cys-400 and Cys-377–Cys-383. A helical membrane pass occupies residues 445–465 (TPVVLIIVVTFTSAAILVVLS). At 466-852 (STASYVFLQR…ELTITLEDGR (387 aa)) the chain is on the cytoplasmic side. Positions 532–819 (FSNANKLGQG…TLPTPKQPAF (288 aa)) constitute a Protein kinase domain. Residues 538-546 (LGQGGFGPV) and Lys-560 each bind ATP. Position 566 is a phosphoserine (Ser-566). The interval 621–638 (KLCQRLDWKMRCNIILGI) is caM-binding. The active-site Proton acceptor is the Asp-657. 2 positions are modified to phosphoserine: Ser-661 and Ser-674. Thr-691 is subject to Phosphothreonine. The tract at residues 826–852 (SSSKASSSTKPETCSENELTITLEDGR) is disordered. Phosphoserine occurs at positions 831 and 840. Over residues 834 to 845 (TKPETCSENELT) the composition is skewed to polar residues. Thr-847 carries the post-translational modification Phosphothreonine.

Belongs to the protein kinase superfamily. Ser/Thr protein kinase family.

It is found in the cell membrane. The catalysed reaction is L-seryl-[protein] + ATP = O-phospho-L-seryl-[protein] + ADP + H(+). The enzyme catalyses L-threonyl-[protein] + ATP = O-phospho-L-threonyl-[protein] + ADP + H(+). This chain is G-type lectin S-receptor-like serine/threonine-protein kinase At4g03230, found in Arabidopsis thaliana (Mouse-ear cress).